Reading from the N-terminus, the 671-residue chain is DNA ligase (671 aa).

NAD(+) is bound by residues 32-36 (DAEYD), 81-82 (SL), and Glu113. Catalysis depends on Lys115, which acts as the N6-AMP-lysine intermediate. Arg136, Glu173, Lys290, and Lys314 together coordinate NAD(+). Residues Cys408, Cys411, Cys426, and Cys432 each coordinate Zn(2+). The 79-residue stretch at 593 to 671 (EIDSPFAGKT…EAEMLRLLGS (79 aa)) folds into the BRCT domain.

It belongs to the NAD-dependent DNA ligase family. LigA subfamily. Mg(2+) serves as cofactor. Mn(2+) is required as a cofactor.

The catalysed reaction is NAD(+) + (deoxyribonucleotide)n-3'-hydroxyl + 5'-phospho-(deoxyribonucleotide)m = (deoxyribonucleotide)n+m + AMP + beta-nicotinamide D-nucleotide.. Functionally, DNA ligase that catalyzes the formation of phosphodiester linkages between 5'-phosphoryl and 3'-hydroxyl groups in double-stranded DNA using NAD as a coenzyme and as the energy source for the reaction. It is essential for DNA replication and repair of damaged DNA. The chain is DNA ligase from Escherichia coli (strain SE11).